The sequence spans 496 residues: Adenosylhomocysteinase (496 aa).

Substrate is bound by residues Thr68, Asp157, and Glu219. 220–222 is a binding site for NAD(+); that stretch reads TTT. Lys249 and Asp253 together coordinate substrate. Residues Asn254, 283–288, Glu306, Asn341, 362–364, and Asn410 contribute to the NAD(+) site; these read GYGDVG and IGH.

The protein belongs to the adenosylhomocysteinase family. It depends on NAD(+) as a cofactor.

The protein localises to the cytoplasm. It catalyses the reaction S-adenosyl-L-homocysteine + H2O = L-homocysteine + adenosine. It participates in amino-acid biosynthesis; L-homocysteine biosynthesis; L-homocysteine from S-adenosyl-L-homocysteine: step 1/1. In terms of biological role, may play a key role in the regulation of the intracellular concentration of adenosylhomocysteine. The protein is Adenosylhomocysteinase of Mycolicibacterium paratuberculosis (strain ATCC BAA-968 / K-10) (Mycobacterium paratuberculosis).